Reading from the N-terminus, the 113-residue chain is Large ribosomal subunit protein bL19 (113 aa).

The protein belongs to the bacterial ribosomal protein bL19 family.

In terms of biological role, this protein is located at the 30S-50S ribosomal subunit interface and may play a role in the structure and function of the aminoacyl-tRNA binding site. This is Large ribosomal subunit protein bL19 from Corynebacterium kroppenstedtii (strain DSM 44385 / JCM 11950 / CIP 105744 / CCUG 35717).